The following is a 111-amino-acid chain: Disintegrin piscivostatin-alpha (111 aa).

Residues 1-20 (MIQVLLVTICLAVFPYQGSS) form the signal peptide. The propeptide occupies 21 to 44 (IILESGNVNDYEVVYPRKITPLPK). The Disintegrin domain occupies 45 to 111 (GAVQPKNPCC…GDCPRKHFYA (67 aa)). Disulfide bonds link C53/C76, C67/C73, C72/C97, and C85/C104. Residues 89-91 (RGD) carry the Cell attachment site motif. Residues 110–111 (YA) constitute a propeptide that is removed on maturation.

The protein belongs to the disintegrin family. Dimeric disintegrin subfamily. Heterodimer with piscivostatin-beta; disulfide-linked. In terms of tissue distribution, expressed by the venom gland.

The protein resides in the secreted. Inhibits fibrinogen interaction with platelets. Acts by binding to alpha-IIb/beta-3 (ITGA2B/ITGB3) on the platelet surface and inhibits both ADP-induced platelet aggregation and platelet aggregate dissociation in human platelet-rich plasma. This chain is Disintegrin piscivostatin-alpha, found in Agkistrodon piscivorus piscivorus (Eastern cottonmouth).